The primary structure comprises 115 residues: Large ribosomal subunit protein bL20 (115 aa).

It belongs to the bacterial ribosomal protein bL20 family.

Binds directly to 23S ribosomal RNA and is necessary for the in vitro assembly process of the 50S ribosomal subunit. It is not involved in the protein synthesizing functions of that subunit. This chain is Large ribosomal subunit protein bL20, found in Synechococcus sp. (strain RCC307).